Here is a 399-residue protein sequence, read N- to C-terminus: Elongation factor Tu (399 aa).

Residues Lys10–Lys209 form the tr-type G domain. Residues Gly19 to Thr26 are G1. Position 19 to 26 (Gly19 to Thr26) interacts with GTP. Thr26 lines the Mg(2+) pocket. A G2 region spans residues Gly60–Ala64. Residues Asp81–Gly84 form a G3 region. Residues Asp81 to His85 and Asn136 to Asp139 each bind GTP. The G4 stretch occupies residues Asn136–Asp139. Residues Ser174 to Leu176 are G5.

The protein belongs to the TRAFAC class translation factor GTPase superfamily. Classic translation factor GTPase family. EF-Tu/EF-1A subfamily. In terms of assembly, monomer.

It is found in the cytoplasm. It catalyses the reaction GTP + H2O = GDP + phosphate + H(+). In terms of biological role, GTP hydrolase that promotes the GTP-dependent binding of aminoacyl-tRNA to the A-site of ribosomes during protein biosynthesis. The polypeptide is Elongation factor Tu (Helicobacter pylori (strain P12)).